Reading from the N-terminus, the 159-residue chain is Small ribosomal subunit protein uS7 (159 aa).

Belongs to the universal ribosomal protein uS7 family. Part of the 30S ribosomal subunit. Contacts proteins S9 and S11.

One of the primary rRNA binding proteins, it binds directly to 16S rRNA where it nucleates assembly of the head domain of the 30S subunit. Is located at the subunit interface close to the decoding center, probably blocks exit of the E-site tRNA. In Rickettsia felis (strain ATCC VR-1525 / URRWXCal2) (Rickettsia azadi), this protein is Small ribosomal subunit protein uS7.